We begin with the raw amino-acid sequence, 271 residues long: Oxidation resistance protein 1 (271 aa).

Residues 15-41 (WSNSEESDRDPRHLKSSDDLSNYTGSR) are disordered. Positions 23–32 (RDPRHLKSSD) are enriched in basic and acidic residues. Residues 63-271 (RLLHPEMCDE…IMGLEVWRVG (209 aa)) enclose the TLDc domain.

This sequence belongs to the OXR1 family.

The protein localises to the mitochondrion. In terms of biological role, may be involved in protection from oxidative damage. The chain is Oxidation resistance protein 1 (OXR1) from Candida glabrata (strain ATCC 2001 / BCRC 20586 / JCM 3761 / NBRC 0622 / NRRL Y-65 / CBS 138) (Yeast).